The primary structure comprises 115 residues: Large ribosomal subunit protein bL19 (115 aa).

It belongs to the bacterial ribosomal protein bL19 family.

This protein is located at the 30S-50S ribosomal subunit interface and may play a role in the structure and function of the aminoacyl-tRNA binding site. This Streptococcus pyogenes serotype M2 (strain MGAS10270) protein is Large ribosomal subunit protein bL19.